Here is an 82-residue protein sequence, read N- to C-terminus: Cytochrome b559 subunit alpha (82 aa).

Residues 22–36 traverse the membrane as a helical segment; it reads IIHAVTLPAIFIAGF. Residue histidine 24 participates in heme binding.

The protein belongs to the PsbE/PsbF family. As to quaternary structure, heterodimer of an alpha subunit and a beta subunit. PSII is composed of 1 copy each of membrane proteins PsbA, PsbB, PsbC, PsbD, PsbE, PsbF, PsbH, PsbI, PsbJ, PsbK, PsbL, PsbM, PsbT, PsbX, PsbY, Psb30/Ycf12, peripheral proteins PsbO, CyanoQ (PsbQ), PsbU, PsbV and a large number of cofactors. It forms dimeric complexes. The cofactor is heme b.

Its subcellular location is the cellular thylakoid membrane. Its function is as follows. This b-type cytochrome is tightly associated with the reaction center of photosystem II (PSII). PSII is a light-driven water:plastoquinone oxidoreductase that uses light energy to abstract electrons from H(2)O, generating O(2) and a proton gradient subsequently used for ATP formation. It consists of a core antenna complex that captures photons, and an electron transfer chain that converts photonic excitation into a charge separation. In Prochlorococcus marinus (strain MIT 9211), this protein is Cytochrome b559 subunit alpha.